The primary structure comprises 367 residues: Cystinosin (367 aa).

An N-terminal signal peptide occupies residues 1–22 (MRRNWLLILTLFLLMFIEKYES). Topologically, residues 23–125 (TVSLTAPPTV…LVIHSRIVSI (103 aa)) are lumenal. Asparagine 36, asparagine 51, asparagine 66, asparagine 84, asparagine 104, and asparagine 107 each carry an N-linked (GlcNAc...) asparagine glycan. One can recognise a PQ-loop 1 domain in the interval 123–189 (VSIINQVIGW…LLWVPYIQEE (67 aa)). The helical transmembrane segment at 126–150 (INQVIGWIYFMAWSVSFYPQVIQNW) threads the bilayer. The Cytoplasmic segment spans residues 151–159 (RRKSVIGLS). A helical membrane pass occupies residues 160-179 (FDFLALNLTGFVAYSVFNIG). Residue asparagine 166 participates in L-cystine binding. Residues 180 to 202 (LLWVPYIQEEFLLKYPNGVNPVD) are Lumenal-facing. A helical membrane pass occupies residues 203–225 (SNDAFFSLHAVALTLIVILQCCL). Aspartate 205 is a H(+) binding site. At 226–234 (YERGNQRVS) the chain is on the cytoplasmic side. A helical transmembrane segment spans residues 235-257 (WPSIGFLVLAWLFVLVTMIVAAV). Topologically, residues 258 to 263 (GITTWL) are lumenal. Positions 263 to 328 (LQFLFCFSYI…QSYNNDQWTL (66 aa)) constitute a PQ-loop 2 domain. The chain crosses the membrane as a helical span at residues 264–289 (QFLFCFSYIKLIITLIKYFPQAYMNF). Residues lysine 273, lysine 280, and tyrosine 281 each coordinate L-cystine. Residues 290–298 (YYKSTKGWS) are Cytoplasmic-facing. A helical membrane pass occupies residues 299-308 (IGGVLLDFTG). Residue aspartate 305 participates in L-cystine binding. H(+) is bound at residue aspartate 305. Over 309-331 (GSFSLLQMFLQSYNNDQWTLIFG) the chain is Lumenal. The helical transmembrane segment at 332–354 (DPTKFGLGVFTIFFDVVFFIQHF) threads the bilayer. Aspartate 346 provides a ligand contact to H(+). Topologically, residues 355-367 (YLYRKKPGYDQLN) are cytoplasmic. A Lysosomal targeting motif motif is present at residues 362 to 366 (GYDQL).

This sequence belongs to the cystinosin family. As to quaternary structure, interacts with components of the V-ATPase complex. Interacts with components of the Ragulator complex. Interacts with RRAGA/RagA and RRAGC/RagC. Interacts with AP-3 complex subunit mu (AP3M1 or AP3M2).

The protein resides in the lysosome membrane. The protein localises to the melanosome membrane. It carries out the reaction L-cystine(out) + H(+)(out) = L-cystine(in) + H(+)(in). With respect to regulation, switches between a lumen- and a cytosol-open conformation: pH induces conformational changes and shifts the equilibrium to facilitate the transition between the lumen- and cytosol-open conformation, thereby promoting cystine transport. Protonation of specific aspartate residues (Asp-205, Asp-305 and Asp-346) favors the cytosol-open conformation. In terms of biological role, cystine/H(+) symporter that mediates export of cystine, the oxidized dimer of cysteine, from lysosomes. Plays an important role in melanin synthesis by catalyzing cystine export from melanosomes, possibly by inhibiting pheomelanin synthesis. In addition to cystine export, also acts as a positive regulator of mTORC1 signaling in kidney proximal tubular cells, via interactions with components of the v-ATPase and Ragulator complexes. Also involved in small GTPase-regulated vesicle trafficking and lysosomal localization of LAMP2A, independently of cystine transporter activity. This is Cystinosin from Mus musculus (Mouse).